The primary structure comprises 460 residues: Cysteine--tRNA ligase (460 aa).

Residue cysteine 29 participates in Zn(2+) binding. The 'HIGH' region motif lies at methionine 31 to histidine 41. Cysteine 213, histidine 238, and glutamate 242 together coordinate Zn(2+). A 'KMSKS' region motif is present at residues lysine 270–serine 274. Lysine 273 provides a ligand contact to ATP.

Belongs to the class-I aminoacyl-tRNA synthetase family. Monomer. Zn(2+) serves as cofactor.

The protein localises to the cytoplasm. It carries out the reaction tRNA(Cys) + L-cysteine + ATP = L-cysteinyl-tRNA(Cys) + AMP + diphosphate. The chain is Cysteine--tRNA ligase from Verminephrobacter eiseniae (strain EF01-2).